A 96-amino-acid chain; its full sequence is Teretoxin Tgu6.1 (96 aa).

An N-terminal signal peptide occupies residues 1–16 (MRPFLVFVLIVSVSLA). The propeptide occupies 17 to 52 (FSFEDMPNKGGDSVASITADQARGHKRNPLFPFAQR).

Post-translationally, contains 3 disulfide bonds. Expressed by the venom duct.

The protein localises to the secreted. Its function is as follows. The recombinant protein causes paralysis to polychaete worms (Nereis virens), the natural prey of terebrid snails. The polypeptide is Teretoxin Tgu6.1 (Terebra guttata (White spotted auger snail)).